Consider the following 84-residue polypeptide: MAHKKGGGSSKNGRDSQSKRLGVKVYGGQKVISGNIIVRQRGTQFHAGRNVDIGRDHTIFATASGYVKFHTNKFGKKTISVVTE.

Residues 1-21 (MAHKKGGGSSKNGRDSQSKRL) are disordered.

The protein belongs to the bacterial ribosomal protein bL27 family.

This chain is Large ribosomal subunit protein bL27, found in Brachyspira hyodysenteriae (strain ATCC 49526 / WA1).